Here is an 860-residue protein sequence, read N- to C-terminus: Protein argonaute-3 (860 aa).

In terms of domain architecture, PAZ spans 230–349 (PVIQFMCEVL…LPLEVCNIVA (120 aa)). The region spanning 518-819 (LIIVILPGKT…VAFRARYHLV (302 aa)) is the Piwi domain. Positions 530–567 (YAEVKRAGDTLLGMATQCVQVKNVIKTSPQTLSNLCLK) are interaction with guide RNA. Residues aspartate 598, glutamate 638, and aspartate 670 each contribute to the a divalent metal cation site. The tract at residues 758–805 (QGTSRPSHYHVLWDDNCFTADELQLLTYQLCHTYVRCTRSVSIPAPAY) is interaction with guide RNA. Histidine 808 serves as a coordination point for a divalent metal cation.

It belongs to the argonaute family. Ago subfamily.

It is found in the cytoplasm. Its subcellular location is the P-body. The enzyme catalyses Endonucleolytic cleavage to 5'-phosphomonoester.. Functionally, required for RNA-mediated gene silencing (RNAi). Binds to short RNAs such as microRNAs (miRNAs) and represses the translation of mRNAs which are complementary to them. Possesses RNA slicer activity but only on select RNAs bearing 5'- and 3'-flanking sequences to the region of guide-target complementarity. This chain is Protein argonaute-3 (AGO3), found in Gallus gallus (Chicken).